Here is a 286-residue protein sequence, read N- to C-terminus: UDP-3-O-acyl-N-acetylglucosamine deacetylase (286 aa).

The Zn(2+) site is built by His81, His240, and Asp244. His266 (proton donor) is an active-site residue.

It belongs to the LpxC family. Zn(2+) is required as a cofactor.

It carries out the reaction a UDP-3-O-[(3R)-3-hydroxyacyl]-N-acetyl-alpha-D-glucosamine + H2O = a UDP-3-O-[(3R)-3-hydroxyacyl]-alpha-D-glucosamine + acetate. It participates in glycolipid biosynthesis; lipid IV(A) biosynthesis; lipid IV(A) from (3R)-3-hydroxytetradecanoyl-[acyl-carrier-protein] and UDP-N-acetyl-alpha-D-glucosamine: step 2/6. Catalyzes the hydrolysis of UDP-3-O-myristoyl-N-acetylglucosamine to form UDP-3-O-myristoylglucosamine and acetate, the committed step in lipid A biosynthesis. The polypeptide is UDP-3-O-acyl-N-acetylglucosamine deacetylase (Francisella tularensis subsp. tularensis (strain FSC 198)).